The chain runs to 403 residues: Para-nitrophenol 4-monooxygenase (403 aa).

Residues 6–35 and 279–289 contribute to the FAD site; these read GVVV…VLEA and FRRGRVVLAGD.

It belongs to the PheA/TfdB FAD monooxygenase family. In terms of assembly, monomer. FAD is required as a cofactor.

It carries out the reaction 4-nitrophenol + NADPH + O2 + H(+) = 1,4-benzoquinone + nitrite + NADP(+) + H2O. It functions in the pathway xenobiotic degradation; 4-nitrophenol degradation. Functionally, involved in the degradation of para-nitrophenol (4-NP). Catalyzes oxidation of 4-nitrophenol (4-NP) at position 4 with concomitant removal of the nitro group as nitrite and production of para-benzoquinone. The chain is Para-nitrophenol 4-monooxygenase (pnpA) from Pseudomonas sp. (strain WBC-3).